A 439-amino-acid chain; its full sequence is Adenylosuccinate synthetase (439 aa).

GTP is bound by residues 13 to 19 (GDEGKGK) and 41 to 43 (GHT). The Proton acceptor role is filled by D14. 2 residues coordinate Mg(2+): D14 and G41. Residues 14-17 (DEGK), 39-42 (NAGH), T130, R144, Q226, T241, and R313 each bind IMP. H42 (proton donor) is an active-site residue. 309-315 (ASTGRQR) provides a ligand contact to substrate. Residues R315, 341–343 (KLD), and 422–424 (STG) contribute to the GTP site.

The protein belongs to the adenylosuccinate synthetase family. In terms of assembly, homodimer. The cofactor is Mg(2+).

Its subcellular location is the cytoplasm. The catalysed reaction is IMP + L-aspartate + GTP = N(6)-(1,2-dicarboxyethyl)-AMP + GDP + phosphate + 2 H(+). The protein operates within purine metabolism; AMP biosynthesis via de novo pathway; AMP from IMP: step 1/2. Functionally, plays an important role in the de novo pathway of purine nucleotide biosynthesis. Catalyzes the first committed step in the biosynthesis of AMP from IMP. This is Adenylosuccinate synthetase from Acinetobacter baylyi (strain ATCC 33305 / BD413 / ADP1).